The sequence spans 268 residues: Embryonic abundant protein VF30.1 (268 aa).

The N-terminal stretch at 1–25 (MEFAHLTVLSLFCLAFVGITATSSG) is a signal peptide. Residues 68–259 (LFFEHDLHPG…GNKAAAWVPN (192 aa)) enclose the BURP domain. The N-linked (GlcNAc...) asparagine glycan is linked to Asn-259.

Seed.

Its subcellular location is the secreted. The chain is Embryonic abundant protein VF30.1 from Vicia faba (Broad bean).